We begin with the raw amino-acid sequence, 211 residues long: Small ribosomal subunit protein uS5 (211 aa).

Residues 1 to 41 (MPGRERRDGGRSADDNKQNDRNERRGGGRRDDRRNQQQDER) form a disordered region. Residues 44–107 (YIERVVTINR…EEARKNFFRV (64 aa)) form the S5 DRBM domain.

The protein belongs to the universal ribosomal protein uS5 family. In terms of assembly, part of the 30S ribosomal subunit. Contacts proteins S4 and S8.

Its function is as follows. With S4 and S12 plays an important role in translational accuracy. In terms of biological role, located at the back of the 30S subunit body where it stabilizes the conformation of the head with respect to the body. This Corynebacterium glutamicum (strain R) protein is Small ribosomal subunit protein uS5.